Consider the following 199-residue polypeptide: Peptidyl-tRNA hydrolase (199 aa).

A tRNA-binding site is contributed by Tyr-18. His-23 serves as the catalytic Proton acceptor. Positions 69, 71, and 117 each coordinate tRNA.

This sequence belongs to the PTH family. Monomer.

It localises to the cytoplasm. The catalysed reaction is an N-acyl-L-alpha-aminoacyl-tRNA + H2O = an N-acyl-L-amino acid + a tRNA + H(+). Its function is as follows. Hydrolyzes ribosome-free peptidyl-tRNAs (with 1 or more amino acids incorporated), which drop off the ribosome during protein synthesis, or as a result of ribosome stalling. Functionally, catalyzes the release of premature peptidyl moieties from peptidyl-tRNA molecules trapped in stalled 50S ribosomal subunits, and thus maintains levels of free tRNAs and 50S ribosomes. This chain is Peptidyl-tRNA hydrolase, found in Prochlorococcus marinus (strain MIT 9515).